The chain runs to 198 residues: MHVALYGGSFDPPHNGHLALCLFAVELLRIDRLIISVSINPFKGRYGAADEQRKQMASLFAGELSRVGISAEVSGWELEKKQPSYTVDLIRYVRSVYPLDRLTLLIGEDSFREIRSWKSWEILPSLCDLAVFRRTSPEDHRENSSFPFSSGTVRLIDFDFPLSSTVIRERVAADMPVGDLLPSAIRHYIVKHGLYRKA.

It belongs to the NadD family.

The catalysed reaction is nicotinate beta-D-ribonucleotide + ATP + H(+) = deamido-NAD(+) + diphosphate. It participates in cofactor biosynthesis; NAD(+) biosynthesis; deamido-NAD(+) from nicotinate D-ribonucleotide: step 1/1. Functionally, catalyzes the reversible adenylation of nicotinate mononucleotide (NaMN) to nicotinic acid adenine dinucleotide (NaAD). The chain is Probable nicotinate-nucleotide adenylyltransferase from Chlorobium limicola (strain DSM 245 / NBRC 103803 / 6330).